The chain runs to 219 residues: Cytidylate kinase (219 aa).

Residue 11-19 (GPAGVGKTT) coordinates ATP.

This sequence belongs to the cytidylate kinase family. Type 1 subfamily.

The protein localises to the cytoplasm. The enzyme catalyses CMP + ATP = CDP + ADP. The catalysed reaction is dCMP + ATP = dCDP + ADP. This Oleidesulfovibrio alaskensis (strain ATCC BAA-1058 / DSM 17464 / G20) (Desulfovibrio alaskensis) protein is Cytidylate kinase.